The primary structure comprises 483 residues: Rhamnulokinase (483 aa).

11-15 (ASSGR) provides a ligand contact to ATP. Residues glycine 79 and 234–236 (HDT) contribute to the substrate site. The active-site Proton acceptor is aspartate 235. ATP is bound at residue threonine 257. Residue asparagine 294 coordinates substrate. Residue glutamine 302 coordinates ATP. The cysteines at positions 352 and 369 are disulfide-linked. Glycine 401 contributes to the ATP binding site.

This sequence belongs to the rhamnulokinase family. It depends on Mg(2+) as a cofactor.

The enzyme catalyses L-rhamnulose + ATP = L-rhamnulose 1-phosphate + ADP + H(+). The protein operates within carbohydrate degradation; L-rhamnose degradation; glycerone phosphate from L-rhamnose: step 2/3. Functionally, involved in the catabolism of L-rhamnose (6-deoxy-L-mannose). Catalyzes the transfer of the gamma-phosphate group from ATP to the 1-hydroxyl group of L-rhamnulose to yield L-rhamnulose 1-phosphate. The sequence is that of Rhamnulokinase from Listeria monocytogenes serovar 1/2a (strain ATCC BAA-679 / EGD-e).